A 123-amino-acid polypeptide reads, in one-letter code: Large ribosomal subunit protein uL29 (123 aa).

This sequence belongs to the universal ribosomal protein uL29 family.

This is Large ribosomal subunit protein uL29 (RPL35) from Babesia bovis.